Reading from the N-terminus, the 1026-residue chain is RecBCD enzyme subunit RecB (1026 aa).

The 438-residue stretch at 1 to 438 folds into the UvrD-like helicase ATP-binding domain; that stretch reads MSSFDIFSPT…LILDTNYRST (438 aa). Residues 1–766 form a DNA-binding and helicase activity, interacts with RecC region; the sequence is MSSFDIFSPT…LANYANITQH (766 aa). Residue 21 to 28 participates in ATP binding; that stretch reads ASAGTGKT. The UvrD-like helicase C-terminal domain maps to 452–700; that stretch reads PSPFLETPQT…KITTVHSSKG (249 aa). Positions 815–1026 are nuclease activity, interacts with RecD and RecA; it reads SQPIYSFSST…KGNGFLQPSP (212 aa). Residues histidine 854, aspartate 940, and aspartate 953 each contribute to the Mg(2+) site. The active-site For nuclease activity is aspartate 953.

This sequence belongs to the helicase family. UvrD subfamily. Heterotrimer of RecB, RecC and RecD. All subunits contribute to DNA-binding. Interacts with RecA. Mg(2+) is required as a cofactor.

The enzyme catalyses Exonucleolytic cleavage (in the presence of ATP) in either 5'- to 3'- or 3'- to 5'-direction to yield 5'-phosphooligonucleotides.. It carries out the reaction Couples ATP hydrolysis with the unwinding of duplex DNA by translocating in the 3'-5' direction.. The catalysed reaction is ATP + H2O = ADP + phosphate + H(+). Functionally, a helicase/nuclease that prepares dsDNA breaks (DSB) for recombinational DNA repair. Binds to DSBs and unwinds DNA via a highly rapid and processive ATP-dependent bidirectional helicase activity. Unwinds dsDNA until it encounters a Chi (crossover hotspot instigator) sequence from the 3' direction. Cuts ssDNA a few nucleotides 3' to the Chi site. The properties and activities of the enzyme are changed at Chi. The Chi-altered holoenzyme produces a long 3'-ssDNA overhang and facilitates RecA-binding to the ssDNA for homologous DNA recombination and repair. Holoenzyme degrades any linearized DNA that is unable to undergo homologous recombination. In the holoenzyme this subunit contributes ATPase, 3'-5' helicase, exonuclease activity and loads RecA onto ssDNA. The protein is RecBCD enzyme subunit RecB of Chlamydia muridarum (strain MoPn / Nigg).